Here is a 205-residue protein sequence, read N- to C-terminus: tRNA (guanine-N(7)-)-methyltransferase (205 aa).

S-adenosyl-L-methionine is bound by residues Glu34, Glu59, Asp86, and Asp107. Asp107 is an active-site residue. Lys111 is a substrate binding site. An interaction with RNA region spans residues 113 to 118; sequence RHEKRR. Substrate contacts are provided by residues Asp144 and 182–185; that span reads TGYE.

This sequence belongs to the class I-like SAM-binding methyltransferase superfamily. TrmB family.

It catalyses the reaction guanosine(46) in tRNA + S-adenosyl-L-methionine = N(7)-methylguanosine(46) in tRNA + S-adenosyl-L-homocysteine. It functions in the pathway tRNA modification; N(7)-methylguanine-tRNA biosynthesis. Its function is as follows. Catalyzes the formation of N(7)-methylguanine at position 46 (m7G46) in tRNA. The protein is tRNA (guanine-N(7)-)-methyltransferase of Mycoplasmopsis synoviae (strain 53) (Mycoplasma synoviae).